Consider the following 379-residue polypeptide: Dual-specificity RNA methyltransferase RlmN (379 aa).

Glu-95 (proton acceptor) is an active-site residue. The Radical SAM core domain occupies 101–345 (EETRGTLCVS…TTVRKTRGDD (245 aa)). The cysteines at positions 108 and 350 are disulfide-linked. [4Fe-4S] cluster-binding residues include Cys-115, Cys-119, and Cys-122. S-adenosyl-L-methionine contacts are provided by residues 176-177 (GE), Ser-208, 230-232 (SLH), and Asn-307. Cys-350 functions as the S-methylcysteine intermediate in the catalytic mechanism.

The protein belongs to the radical SAM superfamily. RlmN family. It depends on [4Fe-4S] cluster as a cofactor.

It localises to the cytoplasm. The enzyme catalyses adenosine(2503) in 23S rRNA + 2 reduced [2Fe-2S]-[ferredoxin] + 2 S-adenosyl-L-methionine = 2-methyladenosine(2503) in 23S rRNA + 5'-deoxyadenosine + L-methionine + 2 oxidized [2Fe-2S]-[ferredoxin] + S-adenosyl-L-homocysteine. It carries out the reaction adenosine(37) in tRNA + 2 reduced [2Fe-2S]-[ferredoxin] + 2 S-adenosyl-L-methionine = 2-methyladenosine(37) in tRNA + 5'-deoxyadenosine + L-methionine + 2 oxidized [2Fe-2S]-[ferredoxin] + S-adenosyl-L-homocysteine. In terms of biological role, specifically methylates position 2 of adenine 2503 in 23S rRNA and position 2 of adenine 37 in tRNAs. m2A2503 modification seems to play a crucial role in the proofreading step occurring at the peptidyl transferase center and thus would serve to optimize ribosomal fidelity. The polypeptide is Dual-specificity RNA methyltransferase RlmN (Burkholderia cenocepacia (strain HI2424)).